Here is a 371-residue protein sequence, read N- to C-terminus: tRNA-specific 2-thiouridylase MnmA (371 aa).

Residues 12 to 19 (GMSGGVDS) and M38 contribute to the ATP site. Positions 98-100 (NPD) are interaction with target base in tRNA. The active-site Nucleophile is the C103. An intrachain disulfide couples C103 to C200. G127 contributes to the ATP binding site. The tract at residues 150 to 152 (KDQ) is interaction with tRNA. C200 (cysteine persulfide intermediate) is an active-site residue. Positions 308 to 309 (RY) are interaction with tRNA.

It belongs to the MnmA/TRMU family.

It is found in the cytoplasm. The catalysed reaction is S-sulfanyl-L-cysteinyl-[protein] + uridine(34) in tRNA + AH2 + ATP = 2-thiouridine(34) in tRNA + L-cysteinyl-[protein] + A + AMP + diphosphate + H(+). In terms of biological role, catalyzes the 2-thiolation of uridine at the wobble position (U34) of tRNA, leading to the formation of s(2)U34. This is tRNA-specific 2-thiouridylase MnmA from Oceanobacillus iheyensis (strain DSM 14371 / CIP 107618 / JCM 11309 / KCTC 3954 / HTE831).